The chain runs to 94 residues: Cystatin-A3 (94 aa).

Positions 46 to 50 (QLVNG) match the Secondary area of contact motif.

It belongs to the cystatin family.

The protein resides in the cytoplasm. Its function is as follows. Intracellular thiol proteinase inhibitor. This is Cystatin-A3 (cpiC) from Dictyostelium discoideum (Social amoeba).